The primary structure comprises 80 residues: RNA-binding protein Hfq (80 aa).

Residues 10-70 (DLFLNTVRKQ…ISTIMPGQPM (61 aa)) enclose the Sm domain.

This sequence belongs to the Hfq family. In terms of assembly, homohexamer.

Its function is as follows. RNA chaperone that binds small regulatory RNA (sRNAs) and mRNAs to facilitate mRNA translational regulation in response to envelope stress, environmental stress and changes in metabolite concentrations. Also binds with high specificity to tRNAs. The polypeptide is RNA-binding protein Hfq (Rhizobium rhizogenes (strain K84 / ATCC BAA-868) (Agrobacterium radiobacter)).